The chain runs to 372 residues: Cytochrome b (372 aa).

The next 4 helical transmembrane spans lie at 25–45 (FGSMLLTCLIMQILTGFFLAI), 69–90 (WIMQNLHAIGASMFFICIYIHI), 105–125 (WLSGTTLLITLMATAFFGYVL), and 170–190 (FFALHFILPFAIISLSSIHII). Heme b is bound by residues histidine 75 and histidine 89. The heme b site is built by histidine 174 and histidine 188. Residue histidine 193 coordinates a ubiquinone. The next 4 helical transmembrane spans lie at 218–238 (YKDMLMITIMVTLLFIILSFL), 280–300 (LGGTMALTMSIMILMTTPFTH), 312–332 (LSQTMFWTLIVTFIMITWTAT), and 339–358 (FITISQTTTVFYFSFFIMTP).

The protein belongs to the cytochrome b family. In terms of assembly, the cytochrome bc1 complex contains 3 respiratory subunits (MT-CYB, CYC1 and UQCRFS1), 2 core proteins (UQCRC1 and UQCRC2) and probably 6 low-molecular weight proteins. Requires heme b as cofactor.

The protein localises to the mitochondrion inner membrane. Component of the ubiquinol-cytochrome c reductase complex (complex III or cytochrome b-c1 complex) that is part of the mitochondrial respiratory chain. The b-c1 complex mediates electron transfer from ubiquinol to cytochrome c. Contributes to the generation of a proton gradient across the mitochondrial membrane that is then used for ATP synthesis. The protein is Cytochrome b (MT-CYB) of Aspidelaps scutatus (Shield-nose snake).